A 475-amino-acid polypeptide reads, in one-letter code: Ribulose bisphosphate carboxylase large chain (475 aa).

A propeptide spanning residues 1–2 is cleaved from the precursor; sequence MS. P3 bears the N-acetylproline mark. Residue K14 is modified to N6,N6,N6-trimethyllysine. Residues N123 and T173 each coordinate substrate. The Proton acceptor role is filled by K175. Substrate is bound at residue K177. 3 residues coordinate Mg(2+): K201, D203, and E204. K201 carries the post-translational modification N6-carboxylysine. The Proton acceptor role is filled by H294. Substrate-binding residues include R295, H327, and S379.

It belongs to the RuBisCO large chain family. Type I subfamily. In terms of assembly, heterohexadecamer of 8 large chains and 8 small chains; disulfide-linked. The disulfide link is formed within the large subunit homodimers. Mg(2+) serves as cofactor. In terms of processing, the disulfide bond which can form in the large chain dimeric partners within the hexadecamer appears to be associated with oxidative stress and protein turnover.

The protein localises to the plastid. Its subcellular location is the chloroplast. The catalysed reaction is 2 (2R)-3-phosphoglycerate + 2 H(+) = D-ribulose 1,5-bisphosphate + CO2 + H2O. The enzyme catalyses D-ribulose 1,5-bisphosphate + O2 = 2-phosphoglycolate + (2R)-3-phosphoglycerate + 2 H(+). RuBisCO catalyzes two reactions: the carboxylation of D-ribulose 1,5-bisphosphate, the primary event in carbon dioxide fixation, as well as the oxidative fragmentation of the pentose substrate in the photorespiration process. Both reactions occur simultaneously and in competition at the same active site. The sequence is that of Ribulose bisphosphate carboxylase large chain from Pseudolarix amabilis (Golden larch).